The chain runs to 363 residues: Diheme-cytochrome-encapsulin shell fusion protein (363 aa).

The first 36 residues, 1–36, serve as a signal peptide directing secretion; sequence MVMGILNTFKKVYAVTGFFALLAVFSLSQVGSSAFA. The tract at residues 37 to 74 is diheme c-type cytochrome; that stretch reads ACAKVDDCFSCHTTQELNAVHKNTPYQGQSCIVCHKAF. Residues Cys-44, Cys-47, His-48, Cys-67, Cys-70, and His-71 each contribute to the heme site. The interval 75-94 is linker; it reads AADDTCSDAKDGRFAKISSE. Residues 95–363 are encapsulin domain; the sequence is ININKEDWNK…KCPQAICTLE (269 aa).

This sequence belongs to the encapsulin family. Family 1 subfamily. The encapsulin nanocompartment is probably formed by 180 monomers, with the N-terminus (diheme domain) inside. There are 36 pores where the pentamers meet as well as 3-fold axis channels and dimer channels. Requires heme as cofactor.

The protein resides in the encapsulin nanocompartment. Fusion of the shell and cargo protein of a type 1 encapsulin nanocompartment. Protein missing its signal peptide makes 33 nm particles in E.coli (called cEnc), protein missing its signal peptide and diheme domain (residues 1-86, called Enc) makes 29 nm particles. The cEnc nancompartment encloses c-type heme. The cargo protein NIR-HAO (AC P0DV45) is probably targeted to the nanocompartment by its association with the diheme domain in cEnc; removal of the diheme domain in Enc halves the amount of cargo. This Kuenenia stuttgartiensis protein is Diheme-cytochrome-encapsulin shell fusion protein.